The primary structure comprises 496 residues: Iroquois-class homeodomain protein irx-4 (496 aa).

Positions 141–203 form a DNA-binding region, homeobox; TALE-type; the sequence is GSTRRKNATR…NARRRLKKEN (63 aa). A disordered region spans residues 203–236; the sequence is NKMTWPPRNKCSDEKRPYDEEEEEEEEEDSQKAT. Residues 221–231 are compositionally biased toward acidic residues; the sequence is DEEEEEEEEED.

The protein belongs to the TALE/IRO homeobox family. Expressed in the neural plate in overlapping patterns with other irx members, which all share an anterior border of expression. Broadly expressed in the tailbud rhombencephalon (hindbrain). Outside the nervous system and at tailbud stages, expressed in the developing otic vesicle, branchial arches and prospective heart region.

Its subcellular location is the nucleus. Its function is as follows. Acts partially redundantly with other irx members in neural patterning. Required for formation of the posterior forebrain, midbrain, hindbrain, and to a lesser extent, spinal cord. Patterns the neuroectoderm in both the anterior/posterior and dorsal/ventral axes. Does not appear to play a role in pronephros kidney development. The sequence is that of Iroquois-class homeodomain protein irx-4 from Xenopus tropicalis (Western clawed frog).